The chain runs to 1334 residues: Aldehyde oxidase 4 (1334 aa).

One can recognise a 2Fe-2S ferredoxin-type domain in the interval 6 to 93 (DELIFFVNGK…GAAVTTVEGV (88 aa)). The [2Fe-2S] cluster site is built by cysteine 45, cysteine 50, cysteine 53, and cysteine 75. A Mo-molybdopterin-binding site is contributed by glutamine 114. [2Fe-2S] cluster-binding residues include cysteine 115, cysteine 118, cysteine 150, and cysteine 152. Cysteine 152 contacts Mo-molybdopterin. The FAD-binding PCMH-type domain maps to 235–421 (FQGERTIWIM…LSVFIPYSGQ (187 aa)). FAD contacts are provided by residues 263–270 (LVMGNTAV), alanine 345, threonine 354, histidine 358, aspartate 367, and alanine 411. Mo-molybdopterin contacts are provided by residues alanine 802, 802-803 (AF), leucine 1043, 1084-1087 (GSMG), glutamine 1199, and leucine 1263. Glutamate 1265 serves as the catalytic Proton acceptor; for azaheterocycle hydroxylase activity.

This sequence belongs to the xanthine dehydrogenase family. In terms of assembly, homodimer. [2Fe-2S] cluster serves as cofactor. It depends on FAD as a cofactor. The cofactor is Mo-molybdopterin.

It is found in the cytoplasm. The catalysed reaction is an aldehyde + O2 + H2O = a carboxylate + H2O2 + H(+). It catalyses the reaction retinal + O2 + H2O = retinoate + H2O2 + H(+). Aldehyde oxidase able to catalyze the oxidation of retinaldehyde into retinoate. Acts as a negative modulator of the epidermal trophism. May be able to oxidize a wide variety of aldehydes into their corresponding carboxylates and to hydroxylate azaheterocycles. This Rattus norvegicus (Rat) protein is Aldehyde oxidase 4 (Aox4).